The chain runs to 747 residues: AT-rich interactive domain-containing protein 4 (747 aa).

The segment at 454–475 (PLPTRKRSEPCRESKEIENGGP) is disordered. Residues 459 to 471 (KRSEPCRESKEIE) are compositionally biased toward basic and acidic residues. In terms of domain architecture, ARID spans 566 to 670 (VCSEEEFLRD…YLLEYEYAHD (105 aa)). The PHD-type zinc finger occupies 674 to 730 (GECCLICRSSTAGDWVNCGSCGEWAHFGCDRRPGLGAFKDYAKTDGLEYVCPNCSVS).

The protein resides in the nucleus. The protein is AT-rich interactive domain-containing protein 4 (ARID4) of Arabidopsis thaliana (Mouse-ear cress).